Here is a 74-residue protein sequence, read N- to C-terminus: UPF0435 protein BcerKBAB4_0386 (74 aa).

The protein belongs to the UPF0435 family.

This chain is UPF0435 protein BcerKBAB4_0386, found in Bacillus mycoides (strain KBAB4) (Bacillus weihenstephanensis).